Consider the following 329-residue polypeptide: Biotin--protein ligase 2 (329 aa).

The 185-residue stretch at 67–251 folds into the BPL/LPL catalytic domain; sequence ISTHRFGRFL…KFENFFDLFM (185 aa). Residues 84–85, Q107, 111–113, and K182 contribute to the biotin site; these read ST and RGR.

The protein belongs to the biotin--protein ligase family. In terms of tissue distribution, highly expressed in seeds. Expressed in roots, leaves, stems, flowers and siliques.

Its subcellular location is the cytoplasm. Functionally, seems to have no or limited implication in biotin-dependent carboxylase biotinylation in planta. This Arabidopsis thaliana (Mouse-ear cress) protein is Biotin--protein ligase 2 (HCS2).